Here is a 187-residue protein sequence, read N- to C-terminus: Transmembrane protein 11-B, mitochondrial (187 aa).

The next 2 helical transmembrane spans lie at 79–95 and 102–119; these read TAVL…LALP and VSLP…LYGI.

This sequence belongs to the TMEM11 family.

It is found in the mitochondrion inner membrane. Plays a role in mitochondrial morphogenesis. The chain is Transmembrane protein 11-B, mitochondrial (tmem11-b) from Xenopus laevis (African clawed frog).